The following is a 383-amino-acid chain: L-lactate dehydrogenase (383 aa).

An FMN hydroxy acid dehydrogenase domain is found at 1–380 (MIISSGNDYR…NTDCLVQAIK (380 aa)). Tyr-24 is a substrate binding site. Positions 106 and 127 each coordinate FMN. A substrate-binding site is contributed by Tyr-129. FMN is bound at residue Thr-155. Position 164 (Arg-164) interacts with substrate. Residue Lys-251 participates in FMN binding. His-275 functions as the Proton acceptor in the catalytic mechanism. Residue Arg-278 coordinates substrate. 306 to 330 (DSGIRNGLDVVRMLALGADTVLLGR) lines the FMN pocket.

It belongs to the FMN-dependent alpha-hydroxy acid dehydrogenase family. It depends on FMN as a cofactor.

The protein resides in the cell inner membrane. It catalyses the reaction (S)-lactate + A = pyruvate + AH2. Functionally, catalyzes the conversion of L-lactate to pyruvate. Is coupled to the respiratory chain. The polypeptide is L-lactate dehydrogenase (Acinetobacter baumannii (strain SDF)).